A 398-amino-acid chain; its full sequence is MSISKSLVLNEIKKFSPSHIIIGYSGGVDSSVLLNISKELDIPLIAIYINHNLHRDSLKWQIHCQQTCQRYNLQFISHSLDKVPKGESFEAWASKQRMAFFQKIMQPYSKPLLLLGHHQDDQAETFLIQAIRGSGLAGLAGIPHYKELHHGGVLRPLLKYSKIEIEEFAKLNNISYIYDDSNEDIKYRRNLIRNQIIPILQQVNPNIGQTLSRSANICAESNNILQKLLTERLQSISQDTNLIISELIKLDDDIQKSLLHLWFKQNTQQSLKSKQIKELHLAINNPSTGWQIDISNYYQIHIQYNQLIIKYPTTINDMSKEDIISWLSKNLNEEIDLTKIVIRDRKPDDKCKYRGRNKPNKLKILFQELQIPTTERSKAKIILKDQQIIAVYPFFICG.

25–30 (SGGVDS) lines the ATP pocket.

Belongs to the tRNA(Ile)-lysidine synthase family.

It is found in the cytoplasm. It carries out the reaction cytidine(34) in tRNA(Ile2) + L-lysine + ATP = lysidine(34) in tRNA(Ile2) + AMP + diphosphate + H(+). Its function is as follows. Ligates lysine onto the cytidine present at position 34 of the AUA codon-specific tRNA(Ile) that contains the anticodon CAU, in an ATP-dependent manner. Cytidine is converted to lysidine, thus changing the amino acid specificity of the tRNA from methionine to isoleucine. This is tRNA(Ile)-lysidine synthase from Francisella tularensis subsp. novicida (strain U112).